We begin with the raw amino-acid sequence, 790 residues long: Kinesin-like protein KIN-14D (790 aa).

Disordered stretches follow at residues 1 to 56 (MPLR…DVGS) and 116 to 139 (DKEN…LDAK). The tract at residues 1 to 66 (MPLRNQNRAP…TEECGKVEFT (66 aa)) is globular. The segment covering 16 to 33 (VKKEALSSIPFDKRRKET) has biased composition (basic and acidic residues). A compositionally biased stretch (polar residues) spans 34-55 (QGTGRRQVLSTVNRQDANSDVG). 2 coiled-coil regions span residues 117–316 (KENL…HVVQ) and 347–426 (SLEE…LELK). A compositionally biased stretch (basic and acidic residues) spans 127–139 (AEKRYSDKELDAK). In terms of domain architecture, Kinesin motor spans 428–769 (NIRVFCRVRP…LRFAARVNAC (342 aa)). Residue 513 to 520 (GQTGSGKT) coordinates ATP.

The protein belongs to the TRAFAC class myosin-kinesin ATPase superfamily. Kinesin family. KIN-14 subfamily. In terms of tissue distribution, slightly expressed in anther lobes with pollen mother cells at anther stage 5. Strongly expressed at anther stage 6 in the tapetum and meiotic cells. Also detected in the gynoecium and the ovule.

The protein localises to the cytoplasm. The protein resides in the cytoskeleton. Its subcellular location is the phragmoplast. In terms of biological role, kinesin that supports microtubule movement in an ATP-dependent manner and that functions as a minus-end directed motor as well as a plus-end tracking protein. During mitosis, is involved in early spindle assembly. Participates in the capture of antiparallel interpolar microtubules and helps in generating force to coalign microtubules. This Arabidopsis thaliana (Mouse-ear cress) protein is Kinesin-like protein KIN-14D.